We begin with the raw amino-acid sequence, 150 residues long: Lipoprotein signal peptidase (150 aa).

The next 3 helical transmembrane spans lie at 8-28 (FYALVGFLVFLDQVTKYLAHA), 58-78 (GFSWLFFLLGIIALIFIGWFL), and 81-101 (TTGSIVFLALLQGGIAGNVFD). Active-site residues include D116 and D132. A helical transmembrane segment spans residues 126-146 (VVFNIADLFILAGVFGTFLFL).

This sequence belongs to the peptidase A8 family.

The protein localises to the cell membrane. It catalyses the reaction Release of signal peptides from bacterial membrane prolipoproteins. Hydrolyzes -Xaa-Yaa-Zaa-|-(S,diacylglyceryl)Cys-, in which Xaa is hydrophobic (preferably Leu), and Yaa (Ala or Ser) and Zaa (Gly or Ala) have small, neutral side chains.. Its pathway is protein modification; lipoprotein biosynthesis (signal peptide cleavage). Functionally, this protein specifically catalyzes the removal of signal peptides from prolipoproteins. The chain is Lipoprotein signal peptidase from Tropheryma whipplei (strain TW08/27) (Whipple's bacillus).